A 286-amino-acid polypeptide reads, in one-letter code: Putative sugar uptake protein lin0215 (286 aa).

8 helical membrane passes run 4–26 (MIAL…FGGS), 33–55 (GMTL…VYTL), 114–136 (LRII…TSYA), 149–167 (GLIT…VVLI), 177–194 (AILP…IMTH), 207–226 (LLLI…MVHA), 230–252 (VGVA…GGIV), and 264–283 (LYVI…IGVA).

It belongs to the GRP transporter (TC 2.A.7.5) family.

Its subcellular location is the cell membrane. The polypeptide is Putative sugar uptake protein lin0215 (Listeria innocua serovar 6a (strain ATCC BAA-680 / CLIP 11262)).